The chain runs to 1193 residues: DNA-directed RNA polymerase subunit beta (1193 aa).

The disordered stretch occupies residues 1173–1193 (QQAKEAAELEKAKEEALDKTE). Residues 1177–1193 (EAAELEKAKEEALDKTE) show a composition bias toward basic and acidic residues.

It belongs to the RNA polymerase beta chain family. The RNAP catalytic core consists of 2 alpha, 1 beta, 1 beta' and 1 omega subunit. When a sigma factor is associated with the core the holoenzyme is formed, which can initiate transcription.

The catalysed reaction is RNA(n) + a ribonucleoside 5'-triphosphate = RNA(n+1) + diphosphate. Its function is as follows. DNA-dependent RNA polymerase catalyzes the transcription of DNA into RNA using the four ribonucleoside triphosphates as substrates. The chain is DNA-directed RNA polymerase subunit beta from Streptococcus thermophilus (strain CNRZ 1066).